Here is a 256-residue protein sequence, read N- to C-terminus: GTP cyclohydrolase FolE2 (256 aa).

The protein belongs to the GTP cyclohydrolase IV family.

It catalyses the reaction GTP + H2O = 7,8-dihydroneopterin 3'-triphosphate + formate + H(+). It participates in cofactor biosynthesis; 7,8-dihydroneopterin triphosphate biosynthesis; 7,8-dihydroneopterin triphosphate from GTP: step 1/1. In terms of biological role, converts GTP to 7,8-dihydroneopterin triphosphate. The protein is GTP cyclohydrolase FolE2 of Caldicellulosiruptor bescii (strain ATCC BAA-1888 / DSM 6725 / KCTC 15123 / Z-1320) (Anaerocellum thermophilum).